Consider the following 430-residue polypeptide: N-lysine methyltransferase SMYD2-B (430 aa).

Positions 5 to 239 (EGLERFDSPG…AGEEVFTSYI (235 aa)) constitute an SET domain. Position 15–17 (15–17 (KGR)) interacts with S-adenosyl-L-methionine. Residues Cys-50, Cys-53, Cys-63, Cys-66, Cys-72, Cys-76, His-84, and Cys-88 each coordinate Zn(2+). The MYND-type zinc finger occupies 50 to 88 (CDFCFTRKEGLSKCGKCKQAFYCNVDCQKGDWPMHKLEC). Residues His-135, 204–205 (NH), and 256–258 (YFF) each bind S-adenosyl-L-methionine.

This sequence belongs to the class V-like SAM-binding methyltransferase superfamily.

The protein resides in the cytoplasm. It localises to the cytosol. The protein localises to the nucleus. The catalysed reaction is L-lysyl(4)-[histone H3] + 3 S-adenosyl-L-methionine = N(6),N(6),N(6)-trimethyl-L-lysyl(4)-[histone H3] + 3 S-adenosyl-L-homocysteine + 3 H(+). It carries out the reaction L-lysyl-[protein] + S-adenosyl-L-methionine = N(6)-methyl-L-lysyl-[protein] + S-adenosyl-L-homocysteine + H(+). Protein-lysine N-methyltransferase that methylates both histones and non-histone proteins, including p53/TP53 and RB1. Specifically trimethylates histone H3 'Lys-4' (H3K4me3) in vivo. The activity requires interaction with HSP90alpha. Shows even higher methyltransferase activity on p53/TP53. Monomethylates 'Lys-370' of p53/TP53, leading to decreased DNA-binding activity and subsequent transcriptional regulation activity of p53/TP53. Monomethylates RB1 at 'Lys-860'. This is N-lysine methyltransferase SMYD2-B (smyd2-b) from Xenopus laevis (African clawed frog).